Reading from the N-terminus, the 233-residue chain is MKKTIMASSLAVALGVTGYAAGTGHQAHAAEVNVDQAHLVDLAHNHQDQLNAAPIKDGAYDIHFVKDGFQYNFTSNGTTWSWSYEAANGQTAGFSNVAGADYTTSYNQGSNVQSVSYNAQSSNSNVEAVSAPTYHNYSTSTTSSSVRLSNGNTAGATGSSAAQIMAQRTGVSASTWAAIIARESNGQVNAYNPSGASGLFQTMPGWGPTNTVDQQINAAVKAYKAQGLGAWGF.

The first 29 residues, 1-29 (MKKTIMASSLAVALGVTGYAAGTGHQAHA), serve as a signal peptide directing secretion.

The protein belongs to the transglycosylase family. IsaA subfamily.

It localises to the secreted. Is able to cleave peptidoglycan. The chain is Probable transglycosylase IsaA (isaA) from Staphylococcus aureus (strain USA300).